Consider the following 148-residue polypeptide: MGRIIFVSFGLLVVFLSLSGTGAALNCASGWSGYDQHCYKVFDKPKSWADAEKFCKKQTSGGHLVSFHSSEETDFVVELVSQTLESQILWMGLSKVWNQCDWGWSNGAKLKYKAWAEESYCVYFSSTKKGWRSRACRLLGHFVCKSPA.

An N-terminal signal peptide occupies residues 1-24 (MGRIIFVSFGLLVVFLSLSGTGAA). 3 disulfide bridges follow: C27/C38, C55/C144, and C121/C136. In terms of domain architecture, C-type lectin spans 34–145 (YDQHCYKVFD…CRLLGHFVCK (112 aa)).

The protein belongs to the snaclec family. As to quaternary structure, heterodimer; disulfide-linked. In terms of tissue distribution, expressed by the venom gland.

It is found in the secreted. In terms of biological role, interferes with one step of hemostasis (modulation of platelet aggregation, or coagulation cascade, for example). The protein is Snaclec B1 of Macrovipera lebetinus (Levantine viper).